Consider the following 428-residue polypeptide: 5'-nucleotidase domain-containing protein 4 (428 aa).

Aspartate 22 (nucleophile) is an active-site residue. Residues aspartate 22, aspartate 24, and aspartate 317 each contribute to the Mg(2+) site. The active-site Proton donor is aspartate 24.

This sequence belongs to the 5'(3')-deoxyribonucleotidase family.

This is 5'-nucleotidase domain-containing protein 4 (NT5DC4) from Homo sapiens (Human).